We begin with the raw amino-acid sequence, 351 residues long: Phospho-N-acetylmuramoyl-pentapeptide-transferase (351 aa).

Helical transmembrane passes span 17 to 37 (TAYA…FIIL), 63 to 83 (IPTM…FFWI), 85 to 105 (LWNV…CLGF), 135 to 155 (ISVT…YFPF), 158 to 178 (SLKL…LISA), 190 to 210 (GLAI…AYLT), 230 to 250 (LVIF…FNAY), 254 to 274 (IMMG…TALI), 279 to 299 (ILFA…IIQV), and 328 to 348 (QVVI…LSTL).

It belongs to the glycosyltransferase 4 family. MraY subfamily. Mg(2+) is required as a cofactor.

Its subcellular location is the cell inner membrane. It catalyses the reaction UDP-N-acetyl-alpha-D-muramoyl-L-alanyl-gamma-D-glutamyl-meso-2,6-diaminopimeloyl-D-alanyl-D-alanine + di-trans,octa-cis-undecaprenyl phosphate = di-trans,octa-cis-undecaprenyl diphospho-N-acetyl-alpha-D-muramoyl-L-alanyl-D-glutamyl-meso-2,6-diaminopimeloyl-D-alanyl-D-alanine + UMP. The protein operates within cell wall biogenesis; peptidoglycan biosynthesis. Catalyzes the initial step of the lipid cycle reactions in the biosynthesis of the cell wall peptidoglycan: transfers peptidoglycan precursor phospho-MurNAc-pentapeptide from UDP-MurNAc-pentapeptide onto the lipid carrier undecaprenyl phosphate, yielding undecaprenyl-pyrophosphoryl-MurNAc-pentapeptide, known as lipid I. In Borrelia hermsii (strain HS1 / DAH), this protein is Phospho-N-acetylmuramoyl-pentapeptide-transferase.